The following is a 215-amino-acid chain: Elongation factor Ts (215 aa).

The segment at Thr80–Ala83 is involved in Mg(2+) ion dislocation from EF-Tu.

Belongs to the EF-Ts family.

Its subcellular location is the cytoplasm. Associates with the EF-Tu.GDP complex and induces the exchange of GDP to GTP. It remains bound to the aminoacyl-tRNA.EF-Tu.GTP complex up to the GTP hydrolysis stage on the ribosome. The protein is Elongation factor Ts of Acetivibrio thermocellus (strain ATCC 27405 / DSM 1237 / JCM 9322 / NBRC 103400 / NCIMB 10682 / NRRL B-4536 / VPI 7372) (Clostridium thermocellum).